A 314-amino-acid chain; its full sequence is uncharacterized protein (314 aa).

Basic residues-rich tracts occupy residues 1 to 16 (MAGNSKRRGAVRKAGT) and 49 to 65 (AAKRAAKAAKQQQRRPA). The disordered stretch occupies residues 1–73 (MAGNSKRRGA…PARKTDETEL (73 aa)). S-adenosyl-L-methionine contacts are provided by Gly-266, Ile-286, and Leu-295.

Belongs to the class IV-like SAM-binding methyltransferase superfamily. RNA methyltransferase TrmH family.

This is an uncharacterized protein from Mycobacterium sp. (strain KMS).